The primary structure comprises 227 residues: PKHD-type hydroxylase Bamb_4192 (227 aa).

The region spanning 78–178 (KVFPPLFNRY…RVASFFWIQS (101 aa)) is the Fe2OG dioxygenase domain. Residues H96, D98, and H159 each coordinate Fe cation. 2-oxoglutarate is bound at residue R169.

The cofactor is Fe(2+). L-ascorbate is required as a cofactor.

The chain is PKHD-type hydroxylase Bamb_4192 from Burkholderia ambifaria (strain ATCC BAA-244 / DSM 16087 / CCUG 44356 / LMG 19182 / AMMD) (Burkholderia cepacia (strain AMMD)).